The primary structure comprises 727 residues: MNDQQPFSAITESPSAFSLTIRPDNIGVIGIDVPGEKVNTLKSEFAQQILSVFEQARQHATLRGLILISSKPDSFIAGADITMLNQCRSAEQAENLAKQGQETFEQIAALPFPVVAAIHGACLGGGLELALACDYRVCSLDEKTVLGLPEVQLGLLPGSGGTQRLPRLIGLDSALDLILTGRHLRANQALRQGLVDEAVPHDILLDTAVEMLKKGKRKAEPLGWRSRLLSSPGIRHVLFKMVKRKTRAKTHGNYPATEKIIQVVRRGVEKGREEGYRQEARAFGKLVMTPESAALRHLFFASNALKKTSGAASDAKPIHYVGILGGGLMGGGIASVTATRGQLPVRIKDINEQGINHALKYNWQLLTQRVQRKRMKPTERQRLMTLISGSTDYRGFEHADIVIEAVFEDLALKRQMVAEIEDHAAPHTIFASNTSSLPIHQIAEGARRPQQVIGLHYFSPVDKMPLVEVIPHAHTSAETVATTVALARKQGKTAIVVGDSAGFYVNRILAPYINEAAYCLLEGEPIESIDYALVRFGFPVGPFALLDEVGIDVATKIVPVLSEELGTRFTSPPAFDAILKDGRKGRKNGKGFYRYNKTRRFWQTGREVDSSIYPLLDVTAKAHIDPALISQRGVMMMLNEAARCLDEGVIQCARDGDIGAVFGIGFPPFLGGPFHYMDRLGMETVVKTLLVLQQQYGDRFAPCERLLAMREGQRTFYPPTDEDDSAS.

Positions 1-200 are enoyl-CoA hydratase; it reads MNDQQPFSAI…RQGLVDEAVP (200 aa). The 3-hydroxyacyl-CoA dehydrogenase stretch occupies residues 316 to 727; it reads KPIHYVGILG…PPTDEDDSAS (412 aa).

In the N-terminal section; belongs to the enoyl-CoA hydratase/isomerase family. The protein in the central section; belongs to the 3-hydroxyacyl-CoA dehydrogenase family. Heterotetramer of two alpha chains (FadJ) and two beta chains (FadI).

The protein localises to the cytoplasm. It carries out the reaction a (3S)-3-hydroxyacyl-CoA = a (2E)-enoyl-CoA + H2O. The enzyme catalyses a 4-saturated-(3S)-3-hydroxyacyl-CoA = a (3E)-enoyl-CoA + H2O. It catalyses the reaction a (3S)-3-hydroxyacyl-CoA + NAD(+) = a 3-oxoacyl-CoA + NADH + H(+). The catalysed reaction is (3S)-3-hydroxybutanoyl-CoA = (3R)-3-hydroxybutanoyl-CoA. The protein operates within lipid metabolism; fatty acid beta-oxidation. Its function is as follows. Catalyzes the formation of a hydroxyacyl-CoA by addition of water on enoyl-CoA. Also exhibits 3-hydroxyacyl-CoA epimerase and 3-hydroxyacyl-CoA dehydrogenase activities. This is Fatty acid oxidation complex subunit alpha from Pectobacterium carotovorum subsp. carotovorum (strain PC1).